A 124-amino-acid chain; its full sequence is V-type proton ATPase subunit F (124 aa).

It belongs to the V-ATPase F subunit family. In terms of assembly, V-ATPase is a heteromultimeric enzyme composed of a peripheral catalytic V1 complex (components A to H) attached to an integral membrane V0 proton pore complex (components: a, c, c', c'', d, e, f and VOA1).

It localises to the vacuole membrane. Functionally, subunit of the V1 complex of vacuolar(H+)-ATPase (V-ATPase), a multisubunit enzyme composed of a peripheral complex (V1) that hydrolyzes ATP and a membrane integral complex (V0) that translocates protons. V-ATPase is responsible for acidifying and maintaining the pH of intracellular compartments. In Neosartorya fischeri (strain ATCC 1020 / DSM 3700 / CBS 544.65 / FGSC A1164 / JCM 1740 / NRRL 181 / WB 181) (Aspergillus fischerianus), this protein is V-type proton ATPase subunit F (vma7).